The chain runs to 552 residues: FERRY endosomal RAB5 effector complex subunit 3 (552 aa).

Positions 383 to 403 (LKESLDSGNQNGGNDDKTKNA) are disordered.

As to quaternary structure, component of the FERRY complex composed of five subunits, TBCK, PPP1R21, FERRY3, CRYZL1 and GATD1 with a ratio of 1:2:1:2:4, respectively.

Its subcellular location is the cytoplasm. The protein resides in the early endosome. Its function is as follows. Component of the FERRY complex (Five-subunit Endosomal Rab5 and RNA/ribosome intermediary). The FERRY complex directly interacts with mRNAs and RAB5A, and functions as a RAB5A effector involved in the localization and the distribution of specific mRNAs most likely by mediating their endosomal transport. The complex recruits mRNAs and ribosomes to early endosomes through direct mRNA-interaction. Plays a role in mast cell degranulation. This is FERRY endosomal RAB5 effector complex subunit 3 from Pongo abelii (Sumatran orangutan).